Consider the following 331-residue polypeptide: Pectinesterase (331 aa).

The first 17 residues, 1–17, serve as a signal peptide directing secretion; sequence MVKSVLASALFAVSALA. Gln139 contacts substrate. Asp162 acts as the Proton donor in catalysis. Asp183 (nucleophile) is an active-site residue. Residues Arg248 and Trp250 each coordinate substrate.

This sequence belongs to the pectinesterase family.

Its subcellular location is the secreted. It carries out the reaction [(1-&gt;4)-alpha-D-galacturonosyl methyl ester](n) + n H2O = [(1-&gt;4)-alpha-D-galacturonosyl](n) + n methanol + n H(+). It participates in glycan metabolism; pectin degradation; 2-dehydro-3-deoxy-D-gluconate from pectin: step 1/5. Involved in maceration and soft-rotting of plant tissue. This is Pectinesterase (pme1) from Aspergillus aculeatus.